A 108-amino-acid chain; its full sequence is Nucleoid-associated protein BAV0915 (108 aa).

This sequence belongs to the YbaB/EbfC family. Homodimer.

The protein resides in the cytoplasm. Its subcellular location is the nucleoid. Its function is as follows. Binds to DNA and alters its conformation. May be involved in regulation of gene expression, nucleoid organization and DNA protection. This chain is Nucleoid-associated protein BAV0915, found in Bordetella avium (strain 197N).